A 1305-amino-acid chain; its full sequence is ABC transporter FPSE_09185 (1305 aa).

N-linked (GlcNAc...) asparagine glycosylation is present at N28. The next 6 helical transmembrane spans lie at 44-64 (FCVY…MPLM), 99-119 (LYIV…KFCF), 172-192 (RLGT…VAFT), 199-219 (IVSA…VPIY), 277-297 (IIGA…GLAF), and 312-332 (VGVV…FSYL). In terms of domain architecture, ABC transmembrane type-1 1 spans 48 to 348 (VVGALASIGV…ISQAMVAATE (301 aa)). The region spanning 372–663 (LIFKDVTFEY…ENGVYYSLVE (292 aa)) is the ABC transporter 1 domain. 407 to 414 (GPSGSGKS) lines the ATP pocket. The segment at 434–454 (EAATPRSSKEGERDNHDERKY) is disordered. Over residues 440 to 454 (SSKEGERDNHDERKY) the composition is skewed to basic and acidic residues. N-linked (GlcNAc...) asparagine glycans are attached at residues N468, N507, and N525. Transmembrane regions (helical) follow at residues 737–757 (FLLI…QAWL), 780–800 (GFMW…QCWI), 851–873 (GVFG…CLII), 877–899 (FGWK…SGFW), 964–984 (AVIF…ILWY), and 999–1019 (FMVS…ILGV). Positions 738–1025 (LLITIASMGV…ILGVAPSAAQ (288 aa)) constitute an ABC transmembrane type-1 2 domain. The tract at residues 1038-1057 (DSNRSSQEAEKSGPTVEDTD) is disordered. Residues N1040, N1066, and N1075 are each glycosylated (N-linked (GlcNAc...) asparagine). An ABC transporter 2 domain is found at 1062 to 1300 (IELCNVSFKY…RGIYWDMCQT (239 aa)). Residue 1096–1103 (GPSGCGKT) coordinates ATP. N1125 is a glycosylation site (N-linked (GlcNAc...) asparagine).

Belongs to the ABC transporter superfamily. ABCB family. Multidrug resistance exporter (TC 3.A.1.201) subfamily.

Its subcellular location is the membrane. In terms of biological role, ABC transporter; part of the gene cluster that mediates the biosynthesis of the lipopeptides W493 A and B. W493 A and B consist of six amino acid residues D-allo-thr, L-Ala, D-Ala, L-Gln, D-Tyr, and L-Val/L-Ile linked to a 3-hydroxy-4-methyltetradecanoic acid polyketide chain. May be involved in excretion or internal transport of W493 A and B. This Fusarium pseudograminearum (strain CS3096) (Wheat and barley crown-rot fungus) protein is ABC transporter FPSE_09185.